Consider the following 353-residue polypeptide: Sorbitol dehydrogenase (353 aa).

Cys45 contributes to the Zn(2+) binding site. Residue Tyr51 coordinates substrate. Zn(2+)-binding residues include His70 and Glu71. Residue Glu156 coordinates substrate. NAD(+)-binding positions include Val184, Asp204, Arg209, 271–273 (VGL), and 296–298 (IFR). Residues Arg298 and Tyr299 each coordinate substrate.

The protein belongs to the zinc-containing alcohol dehydrogenase family. Homotetramer. Zn(2+) serves as cofactor.

The catalysed reaction is keto-D-fructose + NADH + H(+) = D-sorbitol + NAD(+). The enzyme catalyses xylitol + NAD(+) = D-xylulose + NADH + H(+). It catalyses the reaction L-iditol + NAD(+) = keto-L-sorbose + NADH + H(+). Its function is as follows. Polyol dehydrogenase that catalyzes the NAD(+)-dependent oxidation of various sugar alcohols. Is mostly active with D-sorbitol (D-glucitol), xylitol and L-iditol as substrates, leading to the C2-oxidized products D-fructose, D-xylulose and L-sorbose, respectively. This is Sorbitol dehydrogenase from Bacillus subtilis (strain 168).